The following is a 515-amino-acid chain: Protein DETOXIFICATION 42 (515 aa).

At 1–35 (MMSEDGYNTDFPRNPLYIFFSDFRSVLKFDELGLE) the chain is on the cytoplasmic side. Residues 36–56 (IARIALPAALALTADPIASLV) form a helical membrane-spanning segment. At 57–58 (DT) the chain is on the extracellular side. Residues 59–79 (AFIGQIGPVELAAVGVSIALF) traverse the membrane as a helical segment. Residues 80–168 (NQVSRIAIFP…AKKRNIPSAS (89 aa)) lie on the Cytoplasmic side of the membrane. The helical transmembrane segment at 169–189 (SALIIGGVLGLFQAVFLISAA) threads the bilayer. Residues 190–211 (KPLLSFMGVKHDSPMMRPSQRY) are Extracellular-facing. Residues 212 to 232 (LSLRSLGAPAVLLSLAAQGVF) traverse the membrane as a helical segment. Residues 233-242 (RGFKDTTTPL) are Cytoplasmic-facing. A helical membrane pass occupies residues 243–263 (FATVIGDVTNIILDPIFIFVF). Over 264 to 266 (RLG) the chain is Extracellular. The helical transmembrane segment at 267–287 (VTGAATAHVISQYLMCGILLW) threads the bilayer. The Cytoplasmic segment spans residues 288–312 (KLMGQVDIFNMSTKHLQFCRFMKNG). Residues 313–333 (FLLLMRVIAVTFCVTLSASLA) form a helical membrane-spanning segment. At 334–349 (AREGSTSMAAFQVCLQ) the chain is on the extracellular side. A helical membrane pass occupies residues 350 to 370 (VWLATSLLADGYAVAGQAILA). The Cytoplasmic segment spans residues 371-390 (SAFAKKDYKRAAATASRVLQ). A helical membrane pass occupies residues 391–411 (LGLVLGFVLAVILGAGLHFGA). The Extracellular portion of the chain corresponds to 412–423 (RVFTKDDKVLHL). The chain crosses the membrane as a helical span at residues 424–444 (ISIGLPFVAGTQPINALAFVF). At 445 to 453 (DGVNFGASD) the chain is on the cytoplasmic side. Residues 454-474 (FGYAAASLVMVAIVSILCLLF) traverse the membrane as a helical segment. The Extracellular segment spans residues 475–480 (LSSTHG). A helical membrane pass occupies residues 481–501 (FIGLWFGLTIYMSLRAAVGFW). The Cytoplasmic segment spans residues 502 to 515 (RIGTGTGPWSFLRS).

It belongs to the multi antimicrobial extrusion (MATE) (TC 2.A.66.1) family. In terms of tissue distribution, expressed in roots, but not in shoots. Detected in the mature regions of the root, extending from above the root-hair region to the root-shoot junction.

The protein resides in the cell membrane. Citrate transporter critical for aluminum tolerance. Responsible for citrate exudation into the rhizosphere to protect roots from aluminum toxicity. The protein is Protein DETOXIFICATION 42 of Arabidopsis thaliana (Mouse-ear cress).